Consider the following 441-residue polypeptide: Arginine biosynthesis bifunctional protein ArgJ, mitochondrial (441 aa).

Residues Thr177, Lys204, Thr215, Glu301, Asn436, and Ser441 each coordinate substrate. The active-site Nucleophile is Thr215.

The protein belongs to the ArgJ family. In terms of assembly, heterodimer of an alpha and a beta chain. The alpha and beta chains are autoproteolytically processed from a single precursor protein within the mitochondrion.

The protein resides in the mitochondrion matrix. The catalysed reaction is N(2)-acetyl-L-ornithine + L-glutamate = N-acetyl-L-glutamate + L-ornithine. The enzyme catalyses L-glutamate + acetyl-CoA = N-acetyl-L-glutamate + CoA + H(+). Its pathway is amino-acid biosynthesis; L-arginine biosynthesis; L-ornithine and N-acetyl-L-glutamate from L-glutamate and N(2)-acetyl-L-ornithine (cyclic): step 1/1. It participates in amino-acid biosynthesis; L-arginine biosynthesis; N(2)-acetyl-L-ornithine from L-glutamate: step 1/4. In terms of biological role, catalyzes two activities which are involved in the cyclic version of arginine biosynthesis: the synthesis of acetylglutamate from glutamate and acetyl-CoA, and of ornithine by transacetylation between acetylornithine and glutamate. The chain is Arginine biosynthesis bifunctional protein ArgJ, mitochondrial from Kluyveromyces lactis (strain ATCC 8585 / CBS 2359 / DSM 70799 / NBRC 1267 / NRRL Y-1140 / WM37) (Yeast).